The sequence spans 614 residues: MPEYRSSTTTKGRNMAGARALWRATGMKTEDFSKPIIAVVNSFTQFVPGHVHLKDLGQLVCREIEAAGGVAKEFNTIAVDDGIAMGHDGMLYSLPSREIIADSVEYMANAHCADALVCISNCDKITPGMLMAALRLNIPAIFVSGGPMEAGKTKLSEHKLDLVDAMVIAADSSASDELTEEYERSACPTCGSCSGMFTANSMNCLTEAIGLSLPGNGTTLATHSDREQLFLTAARRIVDLTKRYYQDEDTSVLPRSIASFKAFENAMTLDIAMGGSTNTILHLLAAAQEAEVDFSMTHIDHLSRKVGQFCKVAPNTPKYHIEDVHRAGGIMAILGELDRAGLLHTDVPTVHSDTMKDALDAWDVMRNNDPELHKFFKAGPAGIPTQQAFSQSTRWSSLDLDRENGCIRSAEHAFSKEGGLAVLYGNIAEDGCIVKTAGVDESILLFKGKARIFESQDDAVKGILNDQVKEGDVVIIRYEGPKGGPGMQEMLYPTSYLKSKGLGKACALLTDGRFSGGTSGLSIGHCSPEAAAGGAIGLIEEGDEIIIDIPNRGINVSLTPEQLKARRQAMEAKGADAWKPAQPRPRKVTTALKAYALLATSADKGAVRDKELLK.

Asp-81 serves as a coordination point for Mg(2+). Cys-122 lines the [2Fe-2S] cluster pocket. 2 residues coordinate Mg(2+): Asp-123 and Lys-124. At Lys-124 the chain carries N6-carboxylysine. Position 193 (Cys-193) interacts with [2Fe-2S] cluster. Glu-489 is a binding site for Mg(2+). The Proton acceptor role is filled by Ser-515.

It belongs to the IlvD/Edd family. As to quaternary structure, homodimer. Requires [2Fe-2S] cluster as cofactor. Mg(2+) serves as cofactor.

The catalysed reaction is (2R)-2,3-dihydroxy-3-methylbutanoate = 3-methyl-2-oxobutanoate + H2O. It carries out the reaction (2R,3R)-2,3-dihydroxy-3-methylpentanoate = (S)-3-methyl-2-oxopentanoate + H2O. The protein operates within amino-acid biosynthesis; L-isoleucine biosynthesis; L-isoleucine from 2-oxobutanoate: step 3/4. It functions in the pathway amino-acid biosynthesis; L-valine biosynthesis; L-valine from pyruvate: step 3/4. In terms of biological role, functions in the biosynthesis of branched-chain amino acids. Catalyzes the dehydration of (2R,3R)-2,3-dihydroxy-3-methylpentanoate (2,3-dihydroxy-3-methylvalerate) into 2-oxo-3-methylpentanoate (2-oxo-3-methylvalerate) and of (2R)-2,3-dihydroxy-3-methylbutanoate (2,3-dihydroxyisovalerate) into 2-oxo-3-methylbutanoate (2-oxoisovalerate), the penultimate precursor to L-isoleucine and L-valine, respectively. The polypeptide is Dihydroxy-acid dehydratase (Hahella chejuensis (strain KCTC 2396)).